The primary structure comprises 338 residues: Ketol-acid reductoisomerase (NADP(+)) (338 aa).

In terms of domain architecture, KARI N-terminal Rossmann spans 1–181 (MQVYYDKDCD…GGGRSGIIET (181 aa)). Residues 24 to 27 (YGSQ), Arg-47, Ser-50, Ser-52, and 82 to 85 (DEFQ) contribute to the NADP(+) site. His-107 is an active-site residue. Gly-133 is a binding site for NADP(+). One can recognise a KARI C-terminal knotted domain in the interval 182–327 (TFKDETETDL…GKLRAMMPWI (146 aa)). 4 residues coordinate Mg(2+): Asp-190, Glu-194, Glu-226, and Glu-230. Ser-251 is a binding site for substrate.

It belongs to the ketol-acid reductoisomerase family. It depends on Mg(2+) as a cofactor.

It carries out the reaction (2R)-2,3-dihydroxy-3-methylbutanoate + NADP(+) = (2S)-2-acetolactate + NADPH + H(+). The enzyme catalyses (2R,3R)-2,3-dihydroxy-3-methylpentanoate + NADP(+) = (S)-2-ethyl-2-hydroxy-3-oxobutanoate + NADPH + H(+). Its pathway is amino-acid biosynthesis; L-isoleucine biosynthesis; L-isoleucine from 2-oxobutanoate: step 2/4. The protein operates within amino-acid biosynthesis; L-valine biosynthesis; L-valine from pyruvate: step 2/4. Involved in the biosynthesis of branched-chain amino acids (BCAA). Catalyzes an alkyl-migration followed by a ketol-acid reduction of (S)-2-acetolactate (S2AL) to yield (R)-2,3-dihydroxy-isovalerate. In the isomerase reaction, S2AL is rearranged via a Mg-dependent methyl migration to produce 3-hydroxy-3-methyl-2-ketobutyrate (HMKB). In the reductase reaction, this 2-ketoacid undergoes a metal-dependent reduction by NADPH to yield (R)-2,3-dihydroxy-isovalerate. The sequence is that of Ketol-acid reductoisomerase (NADP(+)) from Saccharophagus degradans (strain 2-40 / ATCC 43961 / DSM 17024).